The primary structure comprises 403 residues: Flagellar hook protein FlgE (403 aa).

The protein belongs to the flagella basal body rod proteins family.

It is found in the bacterial flagellum basal body. The polypeptide is Flagellar hook protein FlgE (flgE) (Salmonella typhi).